We begin with the raw amino-acid sequence, 181 residues long: Large ribosomal subunit protein uL5 (181 aa).

The protein belongs to the universal ribosomal protein uL5 family. In terms of assembly, part of the 50S ribosomal subunit; part of the 5S rRNA/L5/L18/L25 subcomplex. Contacts the 5S rRNA and the P site tRNA. Forms a bridge to the 30S subunit in the 70S ribosome.

In terms of biological role, this is one of the proteins that bind and probably mediate the attachment of the 5S RNA into the large ribosomal subunit, where it forms part of the central protuberance. In the 70S ribosome it contacts protein S13 of the 30S subunit (bridge B1b), connecting the 2 subunits; this bridge is implicated in subunit movement. Contacts the P site tRNA; the 5S rRNA and some of its associated proteins might help stabilize positioning of ribosome-bound tRNAs. This is Large ribosomal subunit protein uL5 from Mesomycoplasma hyopneumoniae (strain 232) (Mycoplasma hyopneumoniae).